Consider the following 165-residue polypeptide: LIM domain transcription factor LMO4 (165 aa).

LIM zinc-binding domains lie at 23 to 83 (CAGC…LFGN) and 87 to 147 (CSAC…ALIN).

In terms of assembly, interacts strongly with LDBS. Interacts with LDB2 and LDB1. Interaction with complexes consisting of at least LDB1 and LHX3 acts to disassemble the complex; may preferentially disassemble LDB1-LHX3 complexes rather than complexes consisting of LDB1, LHX3 and ISL1. Interacts (via the LIM zinc-binding domain 1) with RBBP8. Interacts with both RPPB8 and LDB1 through the same face and cannot bind to both proteins simultaneously. Interacts with BRCA1 (via the BRCT domains); the interaction represses BRCA1 transcriptional activity. Interacts with DEAF1; LMO4 blocks export from nucleus.

Transcription cofactor. Plays a role in establishing motor neuron identity, in concert with MNX1, acting, at least in part, to disrupt LDB1-LHX3 complexes thereby negatively modulating interneuron genes in motor neurons. The chain is LIM domain transcription factor LMO4 (LMO4) from Bos taurus (Bovine).